The primary structure comprises 380 residues: Glutamine synthetase, chloroplastic (380 aa).

The region spanning 35–125 (MAAEYIWADG…VMCEVFAPDG (91 aa)) is the GS beta-grasp domain. Positions 132 to 380 (TRAKLREIID…RLLIKTVLKG (249 aa)) constitute a GS catalytic domain.

Belongs to the glutamine synthetase family. In terms of assembly, homooctamer.

The protein resides in the plastid. It is found in the chloroplast. The catalysed reaction is L-glutamate + NH4(+) + ATP = L-glutamine + ADP + phosphate + H(+). The chain is Glutamine synthetase, chloroplastic (GLN2) from Chlamydomonas reinhardtii (Chlamydomonas smithii).